The sequence spans 580 residues: Rho guanine nucleotide exchange factor 25 (580 aa).

A compositionally biased stretch (low complexity) spans 48-67; it reads AASGLAAPSGPSSGLSSGPC. Disordered stretches follow at residues 48–76 and 128–157; these read AASG…GPVS and LEGP…KKKA. The region spanning 160–336 is the DH domain; that stretch reads RSMYVLSELV…CFVPKRCNDM (177 aa). The tract at residues 278–299 is important for binding to Rho GTPases; the sequence is LGHRLQLNDLLIKPVQRIMKYQ. The 119-residue stretch at 348–466 folds into the PH domain; sequence KLTAQGKLLG…WIKHVAQILE (119 aa). A sufficient to bind activated GNAQ region spans residues 467-493; sequence SQRDFLNALQSPIEYQRRESQTNSLGR. 2 disordered regions span residues 482 to 524 and 545 to 580; these read QRRE…GSLP and ALGD…EDEL. The segment covering 509-520 has biased composition (polar residues); sequence DQAQGSTHTPIN. Pro residues predominate over residues 555-566; sequence DSPPVSPTPKTP.

Interacts (via the DH domain) with POPDC1 (via the C-terminus cytoplasmic tail). Interacts with activated GNAQ and GNA11. Interacts with RHOA, CDC42 and RAC1. Isoform 1 and isoform 2 are highly expressed in excitable tissues, such as brain, heart and muscle. Also detected in kidney and liver.

It localises to the cell membrane. Its subcellular location is the cytoplasm. It is found in the myofibril. The protein resides in the sarcomere. May play a role in actin cytoskeleton reorganization in different tissues since its activation induces formation of actin stress fibers. It works as a guanine nucleotide exchange factor for Rho family of small GTPases. Links specifically G alpha q/11-coupled receptors to RHOA activation. May be an important regulator of processes involved in axon and dendrite formation. In neurons seems to be an exchange factor primarily for RAC1. Involved in skeletal myogenesis. This chain is Rho guanine nucleotide exchange factor 25 (ARHGEF25), found in Homo sapiens (Human).